The sequence spans 88 residues: MLDTKFDELMEFPCAFPYKVVGDASSTLADRVVEVVQRHVPGDYAPTSKTSSKGTYNSITIRVTVQSKEQVETLYTELAAIEGVKRVL.

This sequence belongs to the UPF0250 family.

In Shewanella sediminis (strain HAW-EB3), this protein is UPF0250 protein Ssed_3490.